The primary structure comprises 962 residues: Integrator complex subunit 7 (962 aa).

Residues Ser-338 and Ser-809 each carry the phosphoserine modification.

The protein belongs to the Integrator subunit 7 family. In terms of assembly, component of the Integrator complex, composed of core subunits INTS1, INTS2, INTS3, INTS4, INTS5, INTS6, INTS7, INTS8, INTS9/RC74, INTS10, INTS11/CPSF3L, INTS12, INTS13, INTS14 and INTS15. The core complex associates with protein phosphatase 2A subunits PPP2CA and PPP2R1A, to form the Integrator-PP2A (INTAC) complex. Interacts with NABP2.

It localises to the nucleus. Its subcellular location is the chromosome. The protein resides in the cytoplasm. Functionally, component of the integrator complex, a multiprotein complex that terminates RNA polymerase II (Pol II) transcription in the promoter-proximal region of genes. The integrator complex provides a quality checkpoint during transcription elongation by driving premature transcription termination of transcripts that are unfavorably configured for transcriptional elongation: the complex terminates transcription by (1) catalyzing dephosphorylation of the C-terminal domain (CTD) of Pol II subunit POLR2A/RPB1 and SUPT5H/SPT5, (2) degrading the exiting nascent RNA transcript via endonuclease activity and (3) promoting the release of Pol II from bound DNA. The integrator complex is also involved in terminating the synthesis of non-coding Pol II transcripts, such as enhancer RNAs (eRNAs), small nuclear RNAs (snRNAs), telomerase RNAs and long non-coding RNAs (lncRNAs). May be not involved in the recruitment of cytoplasmic dynein to the nuclear envelope by different components of the INT complex. Plays a role in DNA damage response (DDR) signaling during the S phase. The polypeptide is Integrator complex subunit 7 (INTS7) (Bos taurus (Bovine)).